A 689-amino-acid polypeptide reads, in one-letter code: DNA ligase (689 aa).

NAD(+)-binding positions include 51–55 (DSEYD), 100–101 (SL), and Glu129. Lys131 acts as the N6-AMP-lysine intermediate in catalysis. Arg152, Glu189, Lys308, and Lys332 together coordinate NAD(+). Residues Cys426, Cys429, Cys444, and Cys450 each contribute to the Zn(2+) site. The region spanning 609-689 (ADEQPLKGQT…ELLALLAANR (81 aa)) is the BRCT domain.

This sequence belongs to the NAD-dependent DNA ligase family. LigA subfamily. Requires Mg(2+) as cofactor. The cofactor is Mn(2+).

It carries out the reaction NAD(+) + (deoxyribonucleotide)n-3'-hydroxyl + 5'-phospho-(deoxyribonucleotide)m = (deoxyribonucleotide)n+m + AMP + beta-nicotinamide D-nucleotide.. DNA ligase that catalyzes the formation of phosphodiester linkages between 5'-phosphoryl and 3'-hydroxyl groups in double-stranded DNA using NAD as a coenzyme and as the energy source for the reaction. It is essential for DNA replication and repair of damaged DNA. The polypeptide is DNA ligase (Shewanella oneidensis (strain ATCC 700550 / JCM 31522 / CIP 106686 / LMG 19005 / NCIMB 14063 / MR-1)).